A 568-amino-acid chain; its full sequence is Periplasmic trehalase (568 aa).

An N-terminal signal peptide occupies residues M1–A38. Residues R169, W176–D177, N213, R222–Q224, R294–E296, and G327 each bind substrate. Active-site proton donor/acceptor residues include D329 and E511. Substrate is bound at residue E526.

Belongs to the glycosyl hydrolase 37 family.

Its subcellular location is the periplasm. The catalysed reaction is alpha,alpha-trehalose + H2O = alpha-D-glucose + beta-D-glucose. In terms of biological role, provides the cells with the ability to utilize trehalose at high osmolarity by splitting it into glucose molecules that can subsequently be taken up by the phosphotransferase-mediated uptake system. In Xanthomonas campestris pv. campestris (strain B100), this protein is Periplasmic trehalase.